An 834-amino-acid chain; its full sequence is Unextended protein (834 aa).

A signal peptide spans 1 to 20 (MNTYFISFITIIIFANGING). Residues 21-182 (TSVDTSNKLL…DFLKIKTFEP (162 aa)) lie on the Extracellular side of the membrane. N-linked (GlcNAc...) asparagine glycosylation is found at Asn38, Asn42, and Asn156. The CNNM transmembrane domain occupies 182–361 (PLIPVWLAII…NDVNDLDKNE (180 aa)). The chain crosses the membrane as a helical span at residues 183–203 (LIPVWLAIIIIVTCLGFSALF). Topologically, residues 204 to 244 (SGLNLGLMSMDRTELKILRNTGTEKEKKYASKIAPVRDQGN) are cytoplasmic. A helical transmembrane segment spans residues 245 to 265 (YLLCSILLGNVLVNSTFTILL). Topologically, residues 266–267 (DG) are extracellular. A helical transmembrane segment spans residues 268-288 (LTSGLFAVIFSTLAIVLFGEI). Topologically, residues 289–298 (TPQAVCSRHG) are cytoplasmic. The chain crosses the membrane as a helical span at residues 299-319 (LAIGAKTILVTKTVMAITAPL). The Extracellular segment spans residues 320 to 834 (SYPVSRILDK…DKFESKQSKP (515 aa)). 2 CBS domains span residues 380–441 (MTHI…NTPL) and 448–515 (YQNP…IVDE). A glycan (N-linked (GlcNAc...) asparagine) is linked at Asn522. 604–656 (YIFTQGKAVDFFVLILEGRVEVTIGKEALMFESGPFTYFGTQALVPNVVIDSP) contributes to the a nucleoside 3',5'-cyclic phosphate binding site. A disordered region spans residues 739–765 (CFAQNQSTRRLSNRSINSSPTNMNRSP). Positions 740 to 763 (FAQNQSTRRLSNRSINSSPTNMNR) are enriched in polar residues. N-linked (GlcNAc...) asparagine glycans are attached at residues Asn743, Asn751, and Asn790. The interval 807–834 (SGEQDTTAASMPLLPKLDDKFESKQSKP) is disordered. A compositionally biased stretch (basic and acidic residues) spans 822–834 (KLDDKFESKQSKP).

This sequence belongs to the ACDP family. As to quaternary structure, interacts with PRL-1, possibly at the plasma membrane.

The protein resides in the cell membrane. Its function is as follows. Probable metal transporter. Acts downstream of PRL-1 and protects the nervous system against olfactory carbon dioxide stimulation. The sequence is that of Unextended protein from Drosophila melanogaster (Fruit fly).